The sequence spans 438 residues: Minor myo-inositol transporter IolF (438 aa).

12 helical membrane-spanning segments follow: residues 15–35 (IAAALANYIDAGSIVAGSAGL), 49–69 (IGLLGALSANAISAAVGALLG), 86–106 (MLVYALGICLVLFGVNFPMLL), 108–128 (GYIIIGLSVGADITASWTIIA), 147–167 (WAAGAVVVLLLSVLAGDLGLL), 171–191 (IVFAHLLVIALITYILRIRLP), 230–250 (ILFLMGVYLVWNLAAGVMGFF), 268–288 (LLQMGLFIFTGLGVALIFMPF), 295–312 (TVFGIAAFMAVIGWTLFL), 317–334 (GLPILLLFIVVIGINNGA), 359–379 (LMFFLVRISIGIWSLFVPMII), and 387–407 (MAAILLGCVTASMIIGLLFAP).

The protein belongs to the major facilitator superfamily. Sugar transporter (TC 2.A.1.1) family.

The protein resides in the cell membrane. Its pathway is polyol metabolism; myo-inositol degradation into acetyl-CoA. Functionally, minor myo-inositol uptake transporter. In Bacillus subtilis (strain 168), this protein is Minor myo-inositol transporter IolF (iolF).